Here is a 274-residue protein sequence, read N- to C-terminus: Energy-coupling factor transporter ATP-binding protein EcfA1 (274 aa).

The ABC transporter domain maps to 11 to 245 (IELKNVKFKY…ERVIEIAKID (235 aa)). ATP is bound at residue 45–52 (GHNGSGKS).

This sequence belongs to the ABC transporter superfamily. Energy-coupling factor EcfA family. As to quaternary structure, forms a stable energy-coupling factor (ECF) transporter complex composed of 2 membrane-embedded substrate-binding proteins (S component), 2 ATP-binding proteins (A component) and 2 transmembrane proteins (T component).

It localises to the cell membrane. Functionally, ATP-binding (A) component of a common energy-coupling factor (ECF) ABC-transporter complex. Unlike classic ABC transporters this ECF transporter provides the energy necessary to transport a number of different substrates. This chain is Energy-coupling factor transporter ATP-binding protein EcfA1, found in Mycoplasma mobile (strain ATCC 43663 / 163K / NCTC 11711) (Mesomycoplasma mobile).